Consider the following 243-residue polypeptide: rRNA adenine N-6-methyltransferase (243 aa).

Asn11, Ile13, Gly38, Glu59, Asp84, and Asn101 together coordinate S-adenosyl-L-methionine.

Belongs to the class I-like SAM-binding methyltransferase superfamily. rRNA adenine N(6)-methyltransferase family.

The enzyme catalyses adenosine(2085) in 23S rRNA + 2 S-adenosyl-L-methionine = N(6)-dimethyladenosine(2085) in 23S rRNA + 2 S-adenosyl-L-homocysteine + 2 H(+). Its function is as follows. This protein produces a dimethylation of the adenine residue at position 2085 in 23S rRNA, resulting in reduced affinity between ribosomes and macrolide-lincosamide-streptogramin B antibiotics. The protein is rRNA adenine N-6-methyltransferase (ermA1) of Staphylococcus aureus (strain Mu50 / ATCC 700699).